We begin with the raw amino-acid sequence, 438 residues long: Porin AaxA (438 aa).

An N-terminal signal peptide occupies residues 1 to 21 (MISFRFLLLSGLCALGISSYA).

Belongs to the OprB family.

It is found in the cell outer membrane. Its function is as follows. Facilitates L-arginine uptake, as part of the AaxABC system. The arginine uptake by the bacterium in the macrophage may be a virulence factor against the host innate immune response. The polypeptide is Porin AaxA (aaxA) (Chlamydia pneumoniae (Chlamydophila pneumoniae)).